The sequence spans 316 residues: Phospholipase A1 4 (316 aa).

The first 4 residues, alanine 1–leucine 4, serve as a signal peptide directing secretion. Positions threonine 5–arginine 14 are excised as a propeptide. Cysteines 20 and 103 form a disulfide. Serine 153 functions as the Nucleophile in the catalytic mechanism. Aspartate 181 (charge relay system) is an active-site residue. 2 disulfide bridges follow: cysteine 192/cysteine 197 and cysteine 235/cysteine 240. The Charge relay system role is filled by histidine 242. Cystine bridges form between cysteine 257/cysteine 284, cysteine 258/cysteine 309, and cysteine 277/cysteine 282.

Belongs to the AB hydrolase superfamily. Lipase family. As to expression, expressed by the venom gland.

The protein localises to the secreted. The catalysed reaction is a 1,2-diacyl-sn-glycero-3-phosphocholine + H2O = a 2-acyl-sn-glycero-3-phosphocholine + a fatty acid + H(+). Functionally, catalyzes the hydrolysis of phosphatidylcholine with phospholipase A1 activity. May act as an allergen and induce hemolytic activity. The sequence is that of Phospholipase A1 4 from Polistes dominula (European paper wasp).